The following is a 302-amino-acid chain: Glutaminase (302 aa).

Substrate is bound by residues Ser-61, Asn-111, Glu-155, Asn-162, Tyr-186, Tyr-238, and Val-256.

This sequence belongs to the glutaminase family. In terms of assembly, homotetramer.

It catalyses the reaction L-glutamine + H2O = L-glutamate + NH4(+). The sequence is that of Glutaminase from Pseudomonas fluorescens (strain ATCC BAA-477 / NRRL B-23932 / Pf-5).